Here is a 547-residue protein sequence, read N- to C-terminus: Solute carrier family 22 member 7 (547 aa).

The next 12 membrane-spanning stretches (helical) occupy residues 21–41, 145–165, 173–193, 203–223, 233–253, 258–278, 345–365, 374–396, 403–423, 431–451, 465–485, and 492–512; these read VALL…PIFL, ATST…GYLS, LLLV…ASVS, LTGT…LEWL, VLSS…GYLI, WLLL…WWVP, ISLC…GLSL, VYQT…YLSV, LTLA…LLVS, TALA…AYLF, MGLT…AALL, and LPKL…LLLP. Residues 521 to 547 are disordered; sequence ETIQDVERKSAPSSLQEEEMPMKQVQD.

Belongs to the major facilitator (TC 2.A.1) superfamily. Organic cation transporter (TC 2.A.1.19) family.

The protein resides in the basolateral cell membrane. It localises to the apical cell membrane. It is found in the cell membrane. It carries out the reaction orotate(out) + L-glutamate(in) = orotate(in) + L-glutamate(out). The enzyme catalyses 3',5'-cyclic GMP(in) = 3',5'-cyclic GMP(out). The catalysed reaction is GMP(in) = GMP(out). It catalyses the reaction 2'-deoxyguanosine(in) = 2'-deoxyguanosine(out). It carries out the reaction GDP(in) = GDP(out). The enzyme catalyses guanosine(in) = guanosine(out). The catalysed reaction is GTP(in) = GTP(out). It catalyses the reaction 3',5'-cyclic AMP(in) = 3',5'-cyclic AMP(out). It carries out the reaction creatinine(in) = creatinine(out). The enzyme catalyses prostaglandin E2(out) = prostaglandin E2(in). The catalysed reaction is 2-oxoglutarate(in) = 2-oxoglutarate(out). It catalyses the reaction glutarate(in) = glutarate(out). It carries out the reaction urate(out) = urate(in). The enzyme catalyses estrone 3-sulfate(out) = estrone 3-sulfate(in). Functions as a Na(+)-independent bidirectional multispecific transporter. Contributes to the renal and hepatic elimination of endogenous organic compounds from the systemic circulation into the urine and bile, respectively. Capable of transporting a wide range of purine and pyrimidine nucleobases, nucleosides and nucleotides, with cGMP, 2'deoxyguanosine and GMP being the preferred substrates. Functions as a pH- and chloride-independent cGMP bidirectional facilitative transporter that can regulate both intracellular and extracellular levels of cGMP and may be involved in cGMP signaling pathways. Mediates orotate/glutamate bidirectional exchange and most likely display a physiological role in hepatic release of glutamate into the blood. Involved in renal secretion and possible reabsorption of creatinine. Able to uptake prostaglandin E2 (PGE2) and may contribute to PGE2 renal excretion. Also transports alpha-ketoglutarate and urate. Apart from the orotate/glutamate exchange, the counterions for the uptake of other SLC22A7/OAT2 substrates remain to be identified. This chain is Solute carrier family 22 member 7 (SLC22A7), found in Sus scrofa (Pig).